The primary structure comprises 107 residues: Multidrug resistance protein mmr (107 aa).

The next 4 membrane-spanning stretches (helical) occupy residues 2–19 (TYLF…ATSL), 29–51 (LWPT…VSIS), 58–80 (VAYA…LFLG), and 84–106 (SVTK…LTGA).

The protein belongs to the drug/metabolite transporter (DMT) superfamily. Small multidrug resistance (SMR) (TC 2.A.7.1) family. Mmr subfamily.

The protein localises to the cell membrane. Multidrug efflux pump. Confers resistance to tetraphenylphosphonium (TPP), erythromycin, ethidium bromide, acriflavine, safranin O and pyronin Y. This chain is Multidrug resistance protein mmr (mmr), found in Mycolicibacterium paratuberculosis (strain ATCC BAA-968 / K-10) (Mycobacterium paratuberculosis).